Consider the following 451-residue polypeptide: ESX secretion system protein YukC (451 aa).

A helical transmembrane segment spans residues 221–241 (IGLGLIVLLVPALIYSMYALF). A coiled-coil region spans residues 362–447 (DEDIQKELDS…KKETEKKDEK (86 aa)). Over residues 376–386 (LEKAQKERQEN) the composition is skewed to basic and acidic residues. The disordered stretch occupies residues 376-451 (LEKAQKERQE…EKKDEKKDDK (76 aa)). A compositionally biased stretch (polar residues) spans 387-397 (KQSNSETSLVD). Residues 406–451 (DEEKQAEEKAAEEKAAAEEKAKKEEQKEKEDEKKETEKKDEKKDDK) show a composition bias toward basic and acidic residues.

Belongs to the EssB family.

The protein resides in the cell membrane. Required for YukE secretion. Probable component or regulator of the ESX/ESAT-6-like secretion system (BsEss). Required to deliver LXG toxins to target cells. This is ESX secretion system protein YukC (yukC) from Bacillus subtilis (strain 168).